Here is a 189-residue protein sequence, read N- to C-terminus: MAPAWSLLLALLLLSCNAICSLGCHLPHSHSLAKRRVLTLLRQLRRVSPSSCLQDRNDFAFPQEALGGSQLQKAQAISVLHEVTQHTFQLFSTEGSAAVWDESLLDRLRTALDQQLTDLQACLRQEEGLPGAPLLKEDSSLAVRKYFHRLTLYLQEKRHSPCAWEVVRAQVMRAFSSSTNLQERFRRKD.

Positions 1–23 (MAPAWSLLLALLLLSCNAICSLG) are cleaved as a signal peptide. Cystine bridges form between Cys24–Cys122 and Cys52–Cys162.

Belongs to the alpha/beta interferon family. As to quaternary structure, interacts with CR2.

The protein resides in the secreted. In terms of biological role, produced by macrophages, IFN-alpha have antiviral activities. Interferon stimulates the production of two enzymes: a protein kinase and an oligoadenylate synthetase. The protein is Interferon alpha-1 of Bos taurus (Bovine).